The sequence spans 596 residues: Aspartate--tRNA(Asp/Asn) ligase (596 aa).

L-aspartate is bound at residue E172. Positions 196–199 (QLFK) are aspartate. R218 contributes to the L-aspartate binding site. ATP is bound by residues 218–220 (RDE) and Q227. H450 lines the L-aspartate pocket. E484 lines the ATP pocket. R491 provides a ligand contact to L-aspartate. 536-539 (GLDR) is an ATP binding site.

This sequence belongs to the class-II aminoacyl-tRNA synthetase family. Type 1 subfamily. As to quaternary structure, homodimer.

It is found in the cytoplasm. The catalysed reaction is tRNA(Asx) + L-aspartate + ATP = L-aspartyl-tRNA(Asx) + AMP + diphosphate. Aspartyl-tRNA synthetase with relaxed tRNA specificity since it is able to aspartylate not only its cognate tRNA(Asp) but also tRNA(Asn). Reaction proceeds in two steps: L-aspartate is first activated by ATP to form Asp-AMP and then transferred to the acceptor end of tRNA(Asp/Asn). This is Aspartate--tRNA(Asp/Asn) ligase from Acidithiobacillus ferrooxidans (strain ATCC 23270 / DSM 14882 / CIP 104768 / NCIMB 8455) (Ferrobacillus ferrooxidans (strain ATCC 23270)).